The sequence spans 34 residues: Photosystem II reaction center protein M (34 aa).

Residues 5 to 25 (ILAFIATALFILIPTAFLLIL) traverse the membrane as a helical segment.

This sequence belongs to the PsbM family. As to quaternary structure, PSII is composed of 1 copy each of membrane proteins PsbA, PsbB, PsbC, PsbD, PsbE, PsbF, PsbH, PsbI, PsbJ, PsbK, PsbL, PsbM, PsbT, PsbX, PsbY, PsbZ, Psb30/Ycf12, at least 3 peripheral proteins of the oxygen-evolving complex and a large number of cofactors. It forms dimeric complexes.

It localises to the plastid. The protein localises to the chloroplast thylakoid membrane. One of the components of the core complex of photosystem II (PSII). PSII is a light-driven water:plastoquinone oxidoreductase that uses light energy to abstract electrons from H(2)O, generating O(2) and a proton gradient subsequently used for ATP formation. It consists of a core antenna complex that captures photons, and an electron transfer chain that converts photonic excitation into a charge separation. This subunit is found at the monomer-monomer interface. This chain is Photosystem II reaction center protein M, found in Angiopteris evecta (Mule's foot fern).